The primary structure comprises 20 residues: Collagenolytic protease 35 kDa 2 (20 aa).

Residues 1 to 20 form the Peptidase S1 domain; it reads IVGGTEVTPGEIPYQLSFQD. Residues 1-20 are disordered; it reads IVGGTEVTPGEIPYQLSFQD.

This sequence belongs to the peptidase S1 family.

The enzyme catalyses Hydrolysis of proteins, with broad specificity for peptide bonds. Native collagen is cleaved about 75% of the length of the molecule from the N-terminus. Low activity on small molecule substrates of both trypsin and chymotrypsin.. In terms of biological role, this enzyme is a serine protease capable of degrading the native triple helix of collagen. The chain is Collagenolytic protease 35 kDa 2 from Chionoecetes opilio (Atlantic snow crab).